The chain runs to 282 residues: Bifunctional protein FolD (282 aa).

NADP(+) contacts are provided by residues Gly-162–Ser-164, Ser-187, and Val-228.

The protein belongs to the tetrahydrofolate dehydrogenase/cyclohydrolase family. In terms of assembly, homodimer.

It carries out the reaction (6R)-5,10-methylene-5,6,7,8-tetrahydrofolate + NADP(+) = (6R)-5,10-methenyltetrahydrofolate + NADPH. The enzyme catalyses (6R)-5,10-methenyltetrahydrofolate + H2O = (6R)-10-formyltetrahydrofolate + H(+). The protein operates within one-carbon metabolism; tetrahydrofolate interconversion. In terms of biological role, catalyzes the oxidation of 5,10-methylenetetrahydrofolate to 5,10-methenyltetrahydrofolate and then the hydrolysis of 5,10-methenyltetrahydrofolate to 10-formyltetrahydrofolate. The chain is Bifunctional protein FolD from Thermus thermophilus (strain ATCC 27634 / DSM 579 / HB8).